Reading from the N-terminus, the 313-residue chain is Malate dehydrogenase (313 aa).

NAD(+) contacts are provided by residues 8–13 (GAGNVG) and D33. Substrate is bound by residues R83 and R89. NAD(+)-binding positions include N96 and 119–121 (ISN). 2 residues coordinate substrate: N121 and R152. The active-site Proton acceptor is H176.

This sequence belongs to the LDH/MDH superfamily. MDH type 3 family.

The enzyme catalyses (S)-malate + NAD(+) = oxaloacetate + NADH + H(+). In terms of biological role, catalyzes the reversible oxidation of malate to oxaloacetate. The sequence is that of Malate dehydrogenase from Bacteroides thetaiotaomicron (strain ATCC 29148 / DSM 2079 / JCM 5827 / CCUG 10774 / NCTC 10582 / VPI-5482 / E50).